The primary structure comprises 1750 residues: Brefeldin A-inhibited guanine nucleotide-exchange protein 3 (1750 aa).

Residue Ala2 is modified to N-acetylalanine. Disordered stretches follow at residues 44–65 (LRSP…IPGP) and 565–596 (EEGS…SSGN). The span at 47–61 (PENSSPVADSESGSS) shows a compositional bias: polar residues. Residues 565–588 (EEGSHPVENGKGDGGHGGFERSDS) are compositionally biased toward basic and acidic residues. A Phosphoserine modification is found at Ser586. An SEC7 domain is found at 601–788 (AIEQRRAYKL…RALYERISRN (188 aa)). Glu703 is an active-site residue. The residue at position 1307 (Ser1307) is a Phosphoserine.

Homodimer.

The protein localises to the cytoplasm. The protein resides in the cytosol. Its subcellular location is the membrane. Its activity is regulated as follows. Inhibited by brefeldin A. In terms of biological role, activates the ARF proteins by exchanging bound GDP for free GTP. Plays a role in vesicular protein sorting. Involved both in the nuclear division phase and in the nuclear fusion phase. This chain is Brefeldin A-inhibited guanine nucleotide-exchange protein 3 (BIG3), found in Arabidopsis thaliana (Mouse-ear cress).